Consider the following 63-residue polypeptide: MIVYVLVGLSAFCIVLYLISQGQSDCVVLITGESVRVQGCRIDGEFGSVLSKLKPFGCGSFRS.

The chain crosses the membrane as a helical span at residues 1 to 21 (MIVYVLVGLSAFCIVLYLISQ). The Cytoplasmic segment spans residues 22–63 (GQSDCVVLITGESVRVQGCRIDGEFGSVLSKLKPFGCGSFRS).

The protein belongs to the Tymovirales TGBp3 protein family.

The protein resides in the host endoplasmic reticulum membrane. In terms of biological role, plays a role in viral cell-to-cell propagation, by facilitating genome transport to neighboring plant cells through plasmosdesmata. May induce the formation of granular vesicles derived from the Endoplasmic reticulum, which align on actin filaments. The chain is Movement protein TGBp3 from Solanum tuberosum (Potato).